We begin with the raw amino-acid sequence, 973 residues long: Coatomer subunit beta (973 aa).

2 HEAT repeats span residues 98–133 (HEMI…REAE) and 134–170 (LLEQ…VSEH). At Ser181 the chain carries Phosphoserine. HEAT repeat units follow at residues 279–317 (NVLV…NNVG) and 318–354 (ALEE…SRNA). Ser540 carries the post-translational modification Phosphoserine.

Oligomeric complex that consists of at least the alpha, beta, beta', gamma, delta, epsilon and zeta subunits. The complex interacts with ARF1 and PAB1. Post-translationally, the N-terminus is blocked.

It is found in the cytoplasm. The protein resides in the golgi apparatus membrane. It localises to the cytoplasmic vesicle. The protein localises to the COPI-coated vesicle membrane. In terms of biological role, the coatomer is a cytosolic protein complex that binds to dilysine motifs and reversibly associates with Golgi non-clathrin-coated vesicles, which further mediate biosynthetic protein transport from the ER, via the Golgi up to the trans Golgi network. Coatomer complex is required for budding from Golgi membranes, and is essential for the retrograde Golgi-to-ER transport of dilysine-tagged proteins. Required for mitochondrial morphology. The chain is Coatomer subunit beta (SEC26) from Saccharomyces cerevisiae (strain ATCC 204508 / S288c) (Baker's yeast).